A 54-amino-acid polypeptide reads, in one-letter code: Large ribosomal subunit protein bL33 (54 aa).

This sequence belongs to the bacterial ribosomal protein bL33 family.

This is Large ribosomal subunit protein bL33 from Corynebacterium jeikeium (strain K411).